Consider the following 315-residue polypeptide: DNA-directed RNA polymerase subunit alpha (315 aa).

The interval 1–228 (MLEIEKPVIQ…EHFKLFMTLT (228 aa)) is alpha N-terminal domain (alpha-NTD). The alpha C-terminal domain (alpha-CTD) stretch occupies residues 245–315 (KEKALEMTIE…LGLNLRLNDE (71 aa)).

The protein belongs to the RNA polymerase alpha chain family. In terms of assembly, homodimer. The RNAP catalytic core consists of 2 alpha, 1 beta, 1 beta' and 1 omega subunit. When a sigma factor is associated with the core the holoenzyme is formed, which can initiate transcription.

The catalysed reaction is RNA(n) + a ribonucleoside 5'-triphosphate = RNA(n+1) + diphosphate. Functionally, DNA-dependent RNA polymerase catalyzes the transcription of DNA into RNA using the four ribonucleoside triphosphates as substrates. The sequence is that of DNA-directed RNA polymerase subunit alpha from Clostridium perfringens (strain ATCC 13124 / DSM 756 / JCM 1290 / NCIMB 6125 / NCTC 8237 / Type A).